We begin with the raw amino-acid sequence, 98 residues long: U1-theraphotoxin-Ap1a (98 aa).

The N-terminal stretch at 1-23 (MRSLTLAAVLACSLLLVFHTSAA) is a signal peptide. The propeptide occupies 24 to 50 (EELEVQDGHLMNPGDGDTALATVDDER). 3 disulfide bridges follow: Cys54/Cys84, Cys58/Cys90, and Cys72/Cys95. The tract at residues 63 to 84 (DGKSKEGKPCKPKGDKNKDKKC) is disordered.

It belongs to the neurotoxin 12 (Hwtx-2) family. 01 (Ap1a) subfamily. As to expression, expressed by the venom gland.

It is found in the secreted. Functionally, is toxic to both insects and mammals. Induces reversible paralysis when injected into S.frugiperda larvae. Reduces both the amplitude and frequency of responses from muscle (GF-TTM and GF-DLM) pathways in the D.melanogaster giant fiber circuit, suggesting an action at the neuromuscular junction, which is mediated by glutamatergic receptors. In mice, intracranial injection of 30 ug causes increased urination, myoclonus, hypermotility with circular movements followed by respiratory and generalized seizures resulting in death within 25-35 minutes of injection. This is U1-theraphotoxin-Ap1a from Acanthoscurria paulensis (Brazilian giant black tarantula spider).